We begin with the raw amino-acid sequence, 224 residues long: Large ribosomal subunit protein uL1 (224 aa).

The protein belongs to the universal ribosomal protein uL1 family. As to quaternary structure, part of the 50S ribosomal subunit.

Functionally, binds directly to 23S rRNA. The L1 stalk is quite mobile in the ribosome, and is involved in E site tRNA release. In terms of biological role, protein L1 is also a translational repressor protein, it controls the translation of the L11 operon by binding to its mRNA. The chain is Large ribosomal subunit protein uL1 from Borrelia hermsii (strain HS1 / DAH).